An 81-amino-acid polypeptide reads, in one-letter code: uncharacterized protein (81 aa).

This is an uncharacterized protein from Vaccinia virus (strain Copenhagen) (VACV).